Reading from the N-terminus, the 177-residue chain is Putative adenylate kinase (177 aa).

Residues glycine 10, glycine 12, lysine 13, threonine 14, and threonine 15 each coordinate ATP. The interval 30–50 (NLRDYALEKGIGEMKENELEI) is NMP. Positions 99–109 (ERGYGREKLGE) are LID. ATP-binding residues include arginine 100 and lysine 138.

The protein belongs to the adenylate kinase family. AK6 subfamily. In terms of assembly, interacts with uS11. Not a structural component of 40S pre-ribosomes, but transiently interacts with them by binding to uS11.

It carries out the reaction AMP + ATP = 2 ADP. The enzyme catalyses ATP + H2O = ADP + phosphate + H(+). In terms of biological role, broad-specificity nucleoside monophosphate (NMP) kinase that catalyzes the reversible transfer of the terminal phosphate group between nucleoside triphosphates and monophosphates. Also has ATPase activity. Involved in the late maturation steps of the 30S ribosomal particles, specifically 16S rRNA maturation. While NMP activity is not required for ribosome maturation, ATPase activity is. Associates transiently with small ribosomal subunit protein uS11. ATP hydrolysis breaks the interaction with uS11. May temporarily remove uS11 from the ribosome to enable a conformational change of the ribosomal RNA that is needed for the final maturation step of the small ribosomal subunit. This is Putative adenylate kinase from Thermococcus kodakarensis (strain ATCC BAA-918 / JCM 12380 / KOD1) (Pyrococcus kodakaraensis (strain KOD1)).